The sequence spans 181 residues: Translationally-controlled tumor protein homolog (181 aa).

Positions 1–181 (MLIYKDIFTD…VKEAILEEKC (181 aa)) constitute a TCTP domain.

Belongs to the TCTP family.

The protein resides in the cytoplasm. In terms of biological role, involved in calcium binding and microtubule stabilization. The chain is Translationally-controlled tumor protein homolog (tct-1) from Caenorhabditis briggsae.